The following is a 162-amino-acid chain: Transcription elongation factor GreA (162 aa).

Residues 48–76 (NSEYQSAKDEQAFVEGRVKQLQQMIQFAQ) are a coiled coil. The tract at residues 111 to 132 (GSAESDPLSGKISNDSPMGKAL) is disordered.

This sequence belongs to the GreA/GreB family.

Its function is as follows. Necessary for efficient RNA polymerase transcription elongation past template-encoded arresting sites. The arresting sites in DNA have the property of trapping a certain fraction of elongating RNA polymerases that pass through, resulting in locked ternary complexes. Cleavage of the nascent transcript by cleavage factors such as GreA or GreB allows the resumption of elongation from the new 3'terminus. GreA releases sequences of 2 to 3 nucleotides. The sequence is that of Transcription elongation factor GreA from Oenococcus oeni (strain ATCC BAA-331 / PSU-1).